We begin with the raw amino-acid sequence, 180 residues long: Beta-lactoglobulin (180 aa).

Residues 1-18 (MKCLLLALGLALACAAQA) form the signal peptide. 3 disulfides stabilise this stretch: C84–C178, C124–C137, and C124–C139.

The protein belongs to the calycin superfamily. Lipocalin family. As to quaternary structure, under physiological conditions beta-lactoglobulin exists as an equilibrium mixture of monomeric and dimeric forms. Interaction with LMBR1L is controversial. Post-translationally, alternate disulfide bonds occur in equal amounts. As to expression, synthesized in mammary gland and secreted in milk.

It localises to the secreted. In terms of biological role, primary component of whey, it binds retinol and is probably involved in the transport of that molecule. The protein is Beta-lactoglobulin (LGB) of Bubalus bubalis (Domestic water buffalo).